The chain runs to 268 residues: Undecaprenyl-diphosphatase (268 aa).

The next 8 helical transmembrane spans lie at 11 to 33 (FLGL…LLLI), 46 to 66 (FEVL…SAKL), 84 to 104 (LGVL…HGFI), 107 to 127 (VLFE…FILL), 144 to 164 (YPLP…IPGV), 185 to 205 (AEFS…YDLF), 213 to 233 (FNDG…GVFV), and 246 to 266 (FALF…ALII).

The protein belongs to the UppP family.

Its subcellular location is the cell inner membrane. It carries out the reaction di-trans,octa-cis-undecaprenyl diphosphate + H2O = di-trans,octa-cis-undecaprenyl phosphate + phosphate + H(+). Its function is as follows. Catalyzes the dephosphorylation of undecaprenyl diphosphate (UPP). Confers resistance to bacitracin. The chain is Undecaprenyl-diphosphatase from Brucella suis (strain ATCC 23445 / NCTC 10510).